Consider the following 471-residue polypeptide: Ribulose bisphosphate carboxylase large chain (471 aa).

Residues 1–2 constitute a propeptide that is removed on maturation; sequence MS. Position 3 is an N-acetylproline (Pro-3). Lys-14 is subject to N6,N6,N6-trimethyllysine. Residues Asn-123 and Thr-173 each contribute to the substrate site. Lys-175 (proton acceptor) is an active-site residue. Lys-177 is a binding site for substrate. Mg(2+) is bound by residues Lys-201, Asp-203, and Glu-204. Lys-201 is subject to N6-carboxylysine. The active-site Proton acceptor is the His-294. Substrate contacts are provided by Arg-295, His-327, and Ser-379.

This sequence belongs to the RuBisCO large chain family. Type I subfamily. Heterohexadecamer of 8 large chains and 8 small chains; disulfide-linked. The disulfide link is formed within the large subunit homodimers. Mg(2+) is required as a cofactor. Post-translationally, the disulfide bond which can form in the large chain dimeric partners within the hexadecamer appears to be associated with oxidative stress and protein turnover.

It is found in the plastid. It localises to the chloroplast. It catalyses the reaction 2 (2R)-3-phosphoglycerate + 2 H(+) = D-ribulose 1,5-bisphosphate + CO2 + H2O. The enzyme catalyses D-ribulose 1,5-bisphosphate + O2 = 2-phosphoglycolate + (2R)-3-phosphoglycerate + 2 H(+). Functionally, ruBisCO catalyzes two reactions: the carboxylation of D-ribulose 1,5-bisphosphate, the primary event in carbon dioxide fixation, as well as the oxidative fragmentation of the pentose substrate in the photorespiration process. Both reactions occur simultaneously and in competition at the same active site. The protein is Ribulose bisphosphate carboxylase large chain of Drymophloeus subdistichus (Palm tree).